Consider the following 144-residue polypeptide: Probable DNA-directed RNA polymerases I and III subunit RPAC2 (144 aa).

Positions 14–47 are disordered; it reads KVEAETMEVDEQPQETPQVDDEEDLNVPSKKKME. The segment covering 18–38 has biased composition (acidic residues); that stretch reads ETMEVDEQPQETPQVDDEEDL.

The protein belongs to the archaeal Rpo11/eukaryotic RPB11/RPC19 RNA polymerase subunit family. Component of the RNA polymerase I (Pol I) and RNA polymerase III (Pol III) complexes consisting of at least 13 and 17 subunits, respectively.

The protein localises to the nucleus. Functionally, DNA-dependent RNA polymerase catalyzes the transcription of DNA into RNA using the four ribonucleoside triphosphates as substrates. Common core component of RNA polymerases I and III which synthesize ribosomal RNA precursors and small RNAs, such as 5S rRNA and tRNAs, respectively. This is Probable DNA-directed RNA polymerases I and III subunit RPAC2 (rpac-19) from Caenorhabditis elegans.